The chain runs to 142 residues: UPF0310 protein PYRAB08750 (142 aa).

This sequence belongs to the UPF0310 family.

The sequence is that of UPF0310 protein PYRAB08750 from Pyrococcus abyssi (strain GE5 / Orsay).